We begin with the raw amino-acid sequence, 55 residues long: Large ribosomal subunit protein bL33 (55 aa).

This sequence belongs to the bacterial ribosomal protein bL33 family.

The sequence is that of Large ribosomal subunit protein bL33 from Pectobacterium carotovorum subsp. carotovorum (strain PC1).